We begin with the raw amino-acid sequence, 127 residues long: Aspartate 1-decarboxylase (127 aa).

The Schiff-base intermediate with substrate; via pyruvic acid role is filled by serine 25. Serine 25 carries the pyruvic acid (Ser) modification. Threonine 57 is a binding site for substrate. Catalysis depends on tyrosine 58, which acts as the Proton donor. Position 73 to 75 (73 to 75) interacts with substrate; sequence GAA.

Belongs to the PanD family. In terms of assembly, heterooctamer of four alpha and four beta subunits. Requires pyruvate as cofactor. Is synthesized initially as an inactive proenzyme, which is activated by self-cleavage at a specific serine bond to produce a beta-subunit with a hydroxyl group at its C-terminus and an alpha-subunit with a pyruvoyl group at its N-terminus.

It localises to the cytoplasm. It catalyses the reaction L-aspartate + H(+) = beta-alanine + CO2. It participates in cofactor biosynthesis; (R)-pantothenate biosynthesis; beta-alanine from L-aspartate: step 1/1. Functionally, catalyzes the pyruvoyl-dependent decarboxylation of aspartate to produce beta-alanine. The sequence is that of Aspartate 1-decarboxylase from Bacillus licheniformis (strain ATCC 14580 / DSM 13 / JCM 2505 / CCUG 7422 / NBRC 12200 / NCIMB 9375 / NCTC 10341 / NRRL NRS-1264 / Gibson 46).